We begin with the raw amino-acid sequence, 202 residues long: LexA repressor (202 aa).

A DNA-binding region (H-T-H motif) is located at residues 28–48; that stretch reads RAEIAQQLGFRSPNAAEEHLK. Active-site for autocatalytic cleavage activity residues include Ser119 and Lys156.

The protein belongs to the peptidase S24 family. As to quaternary structure, homodimer.

It carries out the reaction Hydrolysis of Ala-|-Gly bond in repressor LexA.. Functionally, represses a number of genes involved in the response to DNA damage (SOS response), including recA and lexA. Binds to the 16 bp palindromic sequence 5'-CTGTATATATATACAG-3'. In the presence of single-stranded DNA, RecA interacts with LexA causing an autocatalytic cleavage which disrupts the DNA-binding part of LexA, leading to derepression of the SOS regulon and eventually DNA repair. This Pectobacterium carotovorum subsp. carotovorum (strain PC1) protein is LexA repressor.